The chain runs to 164 residues: Interferon gamma (164 aa).

A signal peptide spans 1 to 19 (MTCQTYNLFVLSVIMIYYG). N-linked (GlcNAc...) asparagine glycans are attached at residues Asn42 and Asn61.

This sequence belongs to the type II (or gamma) interferon family. As to quaternary structure, homodimer.

Its subcellular location is the secreted. Its function is as follows. Produced by lymphocytes activated by specific antigens or mitogens. IFN-gamma, in addition to having antiviral activity, has important immunoregulatory functions. It is a potent activator of macrophages, it has antiproliferative effects on transformed cells and it can potentiate the antiviral and antitumor effects of the type I interferons. The protein is Interferon gamma (IFNG) of Numida meleagris (Helmeted guineafowl).